Reading from the N-terminus, the 421-residue chain is GTPase Obg (421 aa).

An Obg domain is found at 1-158; that stretch reads MFIDVAKIEL…KTIKLELKLL (158 aa). The segment at 21–40 is disordered; it reads AFRREKYEPSGGPAGGDGGD. Positions 159-328 constitute an OBG-type G domain; the sequence is ADVGLIGLPN…LMYLIADTLD (170 aa). GTP is bound by residues 165 to 172, 190 to 194, 211 to 214, 281 to 284, and 309 to 311; these read GLPNVGKS, FTTLE, DIPG, NKTD, and SAA. Ser-172 and Thr-192 together coordinate Mg(2+). Residues 344–421 enclose the OCT domain; the sequence is FEEEKEPDFK…IGDVEFDFYE (78 aa).

Belongs to the TRAFAC class OBG-HflX-like GTPase superfamily. OBG GTPase family. Monomer. Mg(2+) is required as a cofactor.

It localises to the cytoplasm. Functionally, an essential GTPase which binds GTP, GDP and possibly (p)ppGpp with moderate affinity, with high nucleotide exchange rates and a fairly low GTP hydrolysis rate. Plays a role in control of the cell cycle, stress response, ribosome biogenesis and in those bacteria that undergo differentiation, in morphogenesis control. The polypeptide is GTPase Obg (Finegoldia magna (strain ATCC 29328 / DSM 20472 / WAL 2508) (Peptostreptococcus magnus)).